Consider the following 146-residue polypeptide: Snake venom vascular endothelial growth factor toxin (146 aa).

The signal sequence occupies residues 1–24 (MAAYLLAVAILFCIQGWPLGTVQG). The residue at position 25 (Q25) is a Pyrrolidone carboxylic acid. 3 disulfide bridges follow: C38/C80, C69/C115, and C73/C117. The disordered stretch occupies residues 119–146 (PRSASGVNSRKHKRNPEEGEPRAKFPFV). Residues 133–146 (NPEEGEPRAKFPFV) are compositionally biased toward basic and acidic residues.

It belongs to the PDGF/VEGF growth factor family. Snake venom VEGF subfamily. Homodimer; disulfide-linked. Interacts with VEGF receptor-1 (FLT1) with a high affinity, whereas it binds to VEGF receptor-2 (KDR) with a low affinity. Does not bind VEGF receptor-3 (FLT4). As to expression, expressed by the venom gland.

The protein localises to the secreted. Its function is as follows. Snake venom VEGFs may contribute to venom dispersion and prey subjugation by inducing vascular permeability and hypotension. This protein induces vascular permeability probably through VEGF (VEGFR) signaling. This protein also induces a drastic hypotensive effect after intravenous injection. The hypotension is mediated by nitric oxide (NO), which is produced by VEGF-activated endothelium NO synthase. Also induces angiogenesis in vitro. Like other crotalid VEGFs, this protein interacts with VEGF receptor-1 (FLT1) with a high affinity, whereas it binds to VEGF receptor-2 (KDR) with a low affinity. This is Snake venom vascular endothelial growth factor toxin from Bothrops insularis (Golden lancehead).